The primary structure comprises 455 residues: MSQQDKKLTGVFGHPVSDRENSMTAGPRGPLLMQDIYFLEQMSQFDREVIPERRMHAKGSGAFGTFTVTKDITKYTNAKIFSEIGKQTEMFARFSTVAGERGAADAESDIRGFALKFYTEEGNWDLVGNNTPVFFFRDPKLFVSLNRAVKRDPRTNMRDAQNNWDFWTGLPEALHQVTILMSDRGIPKDLRHMHGFGSHTYSMYNDSGERVWVKLHFRTQQGIENLTDEEAAEIIATGRDSSQRDLFEAIEKGDYPKWTMYIQVMTEEQAKNHKDNPFDLTKVWYHDEYPLIEVGEFELNRNPDNYFMDVEQVAFASTNIIPGLDFSPDKMLQGRLFSYGDAQRYRLGVNHWQIPVNQPKGVGIENICPFSRDGQMRVVDNNQGGGTHYYPNNHGKFDSQPEYKKPPFPTDGYGYEYNQRQDDDNYFEQPGKLFRLQSEGAKERILQIQQMQWKA.

The segment at 1–25 (MSQQDKKLTGVFGHPVSDRENSMTA) is disordered.

This sequence belongs to the catalase family.

Functionally, catalytically inactive. The polypeptide is Catalase-like protein (katB) (Staphylococcus aureus).